A 428-amino-acid chain; its full sequence is MQRDYIDAGYSPKDTDLICEFHIEPSAGVNFEEAATHMAGESSIDSWTEIATLSPELAARLKPHVFYMDEDAQTVRVAYSEELFELGSVPQVLSAVAGNILSMKIVDNLRLQDIAFPKSMLREFKGPGFGLSGIRELTGVQDRPLIGTIVKPKVGLTSEKHAEVAYNSFAGGCDLVKDDENLTDQKFNKFEKRAELTLKLAEKAESETGERKMYLCNITAPTCKEMIRRMNILKDLGASYAMIDIVPAGWTALQTLREEADDAGLALHAHRCMHSAYTRNPRHGISMLVVAKLCRLIGLDQLHIGTVVGKMHGEKHEVLSLRDECVLDNVPADESQHVLAQDWGGLKPMFPVASGGLAPTMIPDLYTIFGRDVIMQFGGGIHAHPMGTKAGAAACRQALEASLEGVSLQEYAKNHRELEAAINKWLKK.

The Proton acceptor role is filled by Lys-151. Lys-153 provides a ligand contact to substrate. Residues Lys-177, Asp-179, and Glu-180 each contribute to the Mg(2+) site. Lys-177 carries the N6-carboxylysine modification. The active-site Proton acceptor is the His-270. Substrate is bound by residues Arg-271, His-303, 354–356 (SGG), and 376–379 (QFGG).

Belongs to the RuBisCO large chain family. Type III subfamily. Homodimer or homodecamer. In contrast to form I RuBisCO, the form III RuBisCO is composed solely of large subunits. The cofactor is Mg(2+).

The catalysed reaction is 2 (2R)-3-phosphoglycerate + 2 H(+) = D-ribulose 1,5-bisphosphate + CO2 + H2O. It catalyses the reaction D-ribulose 1,5-bisphosphate + O2 = 2-phosphoglycolate + (2R)-3-phosphoglycerate + 2 H(+). Catalyzes the addition of molecular CO(2) and H(2)O to ribulose 1,5-bisphosphate (RuBP), generating two molecules of 3-phosphoglycerate (3-PGA). Functions in an archaeal AMP degradation pathway, together with AMP phosphorylase and R15P isomerase. The protein is Ribulose bisphosphate carboxylase of Methanosarcina barkeri (strain Fusaro / DSM 804).